We begin with the raw amino-acid sequence, 718 residues long: Polyribonucleotide nucleotidyltransferase (718 aa).

Residues D496 and D502 each contribute to the Mg(2+) site. The region spanning P563–I622 is the KH domain. Positions G632–L700 constitute an S1 motif domain.

Belongs to the polyribonucleotide nucleotidyltransferase family. Mg(2+) serves as cofactor.

Its subcellular location is the cytoplasm. The enzyme catalyses RNA(n+1) + phosphate = RNA(n) + a ribonucleoside 5'-diphosphate. Its function is as follows. Involved in mRNA degradation. Catalyzes the phosphorolysis of single-stranded polyribonucleotides processively in the 3'- to 5'-direction. The chain is Polyribonucleotide nucleotidyltransferase from Nostoc punctiforme (strain ATCC 29133 / PCC 73102).